The primary structure comprises 551 residues: Arginine--tRNA ligase (551 aa).

The short motif at 124 to 134 is the 'HIGH' region element; sequence ANPTGPLHIGH.

The protein belongs to the class-I aminoacyl-tRNA synthetase family. Monomer.

It is found in the cytoplasm. It catalyses the reaction tRNA(Arg) + L-arginine + ATP = L-arginyl-tRNA(Arg) + AMP + diphosphate. This chain is Arginine--tRNA ligase, found in Solidesulfovibrio magneticus (strain ATCC 700980 / DSM 13731 / RS-1) (Desulfovibrio magneticus).